The chain runs to 105 residues: MAVAYAKLYELILKKVKDEKEAEELYNAIIEIVKEEKLAVKTELKDELRGELATKEDIKYLDGKIEMVKKELEYKLIIHTLIILFAIIITNPNAIELIKLLFGFK.

It belongs to the M.jannaschii MJ0023/MJ0349/MJ1072/MJ1074/MJ1107/MJECL16 family.

This is an uncharacterized protein from Methanocaldococcus jannaschii (strain ATCC 43067 / DSM 2661 / JAL-1 / JCM 10045 / NBRC 100440) (Methanococcus jannaschii).